Reading from the N-terminus, the 398-residue chain is Argininosuccinate synthase (398 aa).

ATP is bound by residues 9-17 and Ala36; that span reads AYSGGLDTS. Positions 87 and 92 each coordinate L-citrulline. Residue Gly117 coordinates ATP. L-aspartate contacts are provided by Thr119, Asn123, and Asp124. An L-citrulline-binding site is contributed by Asn123. L-citrulline is bound by residues Arg127, Ser176, Ser185, Glu261, and Tyr273.

This sequence belongs to the argininosuccinate synthase family. Type 1 subfamily. Homotetramer.

It is found in the cytoplasm. The enzyme catalyses L-citrulline + L-aspartate + ATP = 2-(N(omega)-L-arginino)succinate + AMP + diphosphate + H(+). Its pathway is amino-acid biosynthesis; L-arginine biosynthesis; L-arginine from L-ornithine and carbamoyl phosphate: step 2/3. This chain is Argininosuccinate synthase, found in Desulfotalea psychrophila (strain LSv54 / DSM 12343).